A 689-amino-acid polypeptide reads, in one-letter code: Glycine--tRNA ligase beta subunit (689 aa).

The protein belongs to the class-II aminoacyl-tRNA synthetase family. In terms of assembly, tetramer of two alpha and two beta subunits.

It localises to the cytoplasm. It carries out the reaction tRNA(Gly) + glycine + ATP = glycyl-tRNA(Gly) + AMP + diphosphate. The chain is Glycine--tRNA ligase beta subunit from Escherichia coli O127:H6 (strain E2348/69 / EPEC).